We begin with the raw amino-acid sequence, 302 residues long: MKLLILTCLVALGFARPMVEKISESEEYVNEVPEKRLKRRFPVKNEHQVEINHHLRPESEMMSLYYQPFYWSEEMRNLKMTSLPKDRRMAVLKSTVSDEVFPSLQHKSLSLPKSKVQPLSRQQILTFHTLQMVPLSHKLLTTPKREMLPIYERERLPAHKRESLLAHERESLLAHERDILVPQREMSFVPEREFLFASERVVLPEQEKEILHNDEREVLAVHKKEILPPFEKEKVLPLLQHRVVPLPQREIVPPFQRETLLPEEILPVNQWELMPEVVPFDPYPFLQPVAPFYYSTELNEKN.

A signal peptide spans 1–15 (MKLLILTCLVALGFA). Phosphoserine occurs at positions 23 and 25. 16 tandem repeats follow at residues 144–151 (KREMLPIY), 152–159 (ERERLPAH), 160–167 (KRESLLAH), 168–175 (ERESLLAH), 176–182 (ERDILVP), 183–190 (QREMSFVP), 191–198 (EREFLFAS), 199–204 (ERVVLP), 205–214 (EQEKEILHND), 215–222 (EREVLAVH), 223–230 (KKEILPPF), 231–238 (EKEKVLPL), 241–247 (HRVVPLP), 248–255 (QREIVPPF), 256–262 (QRETLLP), and 263–269 (EEILPVN). The 16 X approximate tandem repeats stretch occupies residues 144–269 (KREMLPIYER…LLPEEILPVN (126 aa)).

The protein belongs to the beta-casein family. In terms of tissue distribution, mammary gland specific. Secreted in milk.

The protein localises to the secreted. Important role in determination of the surface properties of the casein micelles. This chain is Beta-casein (CSN2), found in Notamacropus eugenii (Tammar wallaby).